The sequence spans 418 residues: EPS I polysaccharide export inner membrane protein EpsF (418 aa).

10 helical membrane-spanning segments follow: residues 21-41 (VLVVIGMLLVVPMAFPLLPII), 45-65 (CAAIFVILLPLGRLQHVLATA), 142-162 (PLLVWAVLIFISLMLAWIAIY), 170-190 (YVVFVSYLSTITLYALQGSAI), 222-242 (AGTHSSAAVVLLACAVVVLFL), 262-282 (LIVLLALAAAGAVFGSAEFVM), 296-316 (SAWELQLAVEAVLACLFAWLL), 326-346 (MAFLLFVVVCFSTSLFAPAVG), 347-367 (ARLFRYTYCFYIVYLCAFFFA), and 377-397 (KTLASLLLLASFGWAIFIVSA).

The protein to S.marcescens SfuB.

The protein resides in the cell inner membrane. Functionally, probably involved in polymerization and/or export of exopolysaccharide EPS I which functions as a virulence factor. May play a role in export of EPS I or its intermediates across the membranes. This is EPS I polysaccharide export inner membrane protein EpsF (epsF) from Ralstonia nicotianae (strain ATCC BAA-1114 / GMI1000) (Ralstonia solanacearum).